Reading from the N-terminus, the 285-residue chain is Bifunctional protein FolD (285 aa).

NADP(+)-binding positions include 166–168 and Ile-232; that span reads GAS.

This sequence belongs to the tetrahydrofolate dehydrogenase/cyclohydrolase family. As to quaternary structure, homodimer.

The catalysed reaction is (6R)-5,10-methylene-5,6,7,8-tetrahydrofolate + NADP(+) = (6R)-5,10-methenyltetrahydrofolate + NADPH. The enzyme catalyses (6R)-5,10-methenyltetrahydrofolate + H2O = (6R)-10-formyltetrahydrofolate + H(+). It functions in the pathway one-carbon metabolism; tetrahydrofolate interconversion. Catalyzes the oxidation of 5,10-methylenetetrahydrofolate to 5,10-methenyltetrahydrofolate and then the hydrolysis of 5,10-methenyltetrahydrofolate to 10-formyltetrahydrofolate. The chain is Bifunctional protein FolD from Aliivibrio salmonicida (strain LFI1238) (Vibrio salmonicida (strain LFI1238)).